The chain runs to 211 residues: uncharacterized protein (211 aa).

4 helical membrane-spanning segments follow: residues 77–97, 113–133, 152–172, and 179–199; these read FLMF…AITI, GISV…VLIG, ILIS…NVIP, and LLTP…PLFG.

It is found in the cell membrane. This is an uncharacterized protein from Bacillus subtilis (strain 168).